Reading from the N-terminus, the 266-residue chain is Agamous-like MADS-box protein AGL97 (266 aa).

An MADS-box domain is found at 3–63; that stretch reads GVKRKIAIEK…SNSNAAFYSF (61 aa). The stretch at 88–130 forms a coiled coil; the sequence is WEDESLLKSENLEELREAMDSMSTMLRDLKELEKQRDHQTQTL.

In terms of assembly, interacts with AGL27 and AGL62.

It is found in the nucleus. Its function is as follows. Putative transcription factor. In Arabidopsis thaliana (Mouse-ear cress), this protein is Agamous-like MADS-box protein AGL97 (AGL97).